The primary structure comprises 328 residues: Nickel import system permease protein NikB (328 aa).

6 helical membrane-spanning segments follow: residues 11 to 31 (LIQMIVVLFVISTLAFILMKL), 104 to 124 (LLISFSTLVVSLCISIPLGII), 139 to 159 (VISTLSISLPAFFIGIILLFI), 170 to 190 (ILSQFILPVLTLSLGMCAYII), 229 to 249 (ILPIIPLLGISLGSLIGGTVV), and 279 to 299 (VLFIGFFVVIINTIADLLTLL). Residues 100–297 (APITLLISFS…IINTIADLLT (198 aa)) form the ABC transmembrane type-1 domain.

Belongs to the binding-protein-dependent transport system permease family. OppBC subfamily. The complex is composed of two ATP-binding proteins (NikD and NikE), two transmembrane proteins (NikB and NikC) and a solute-binding protein (NikA).

The protein localises to the cell membrane. Part of the ABC transporter complex NikABCDE (Opp2) involved in nickel import. Probably responsible for the translocation of the substrate across the membrane. In Staphylococcus aureus (strain MRSA252), this protein is Nickel import system permease protein NikB.